The sequence spans 290 residues: Transposon Ty3-G Gag polyprotein (290 aa).

Ser-2 carries the N-acetylserine modification. Residues 265 to 282 (RLCFYCKKEGHRLNECRA) form a CCHC-type zinc finger.

It is found in the cytoplasm. Functionally, capsid protein (CA) is the structural component of the virus-like particle (VLP), forming the shell that encapsulates the retrotransposons dimeric RNA genome. Its function is as follows. Nucleocapsid protein p9 (NC) forms the nucleocore that coats the retro-elements dimeric RNA. Binds these RNAs through its zinc fingers. Promotes primer tRNA(i)-Met annealing to the multipartite primer-binding site (PBS), dimerization of Ty3 RNA and initiation of reverse transcription. This chain is Transposon Ty3-G Gag polyprotein (TY3A-G), found in Saccharomyces cerevisiae (strain ATCC 204508 / S288c) (Baker's yeast).